The following is a 401-amino-acid chain: Probable peptidoglycan glycosyltransferase FtsW (401 aa).

Residues 1–26 (MAEVLRWLRLDLGQSGGLAWERLDWR) are Cytoplasmic-facing. A helical membrane pass occupies residues 27 to 47 (LALTVLALAGLGLVMVGSASV). The Periplasmic portion of the chain corresponds to 48-65 (SIAEGATGDPLHYLYRQA). The chain crosses the membrane as a helical span at residues 66–86 (VFLAVALMAAVACLHLSLDQF). Residues 87 to 88 (YR) lie on the Cytoplasmic side of the membrane. Residues 89–109 (GGPVLLVLGFFLLLVVLIPGV) form a helical membrane-spanning segment. Over 110 to 118 (GREVNGATR) the chain is Periplasmic. Residues 119–139 (WIPLGLINLQVAEVARVCFII) traverse the membrane as a helical segment. The Cytoplasmic portion of the chain corresponds to 140–154 (YLAGYCVRRHAELPN). The helical transmembrane segment at 155-175 (TSSAFAVPLAVFSLAAVLLLA) threads the bilayer. Topologically, residues 176–180 (QPDFG) are periplasmic. A helical membrane pass occupies residues 181-201 (TALVLMATALGLLFLAGASLW). Residue R202 is a topological domain, cytoplasmic. A helical transmembrane segment spans residues 203–223 (IGVLGLLLAGAAWLLIVGSPY). The Periplasmic portion of the chain corresponds to 224–278 (RWQRLTTFTDPWADPFNAGFQLTQSLIAIGRGEWFGVGLGASVQKLFYLPEAHTD). The helical transmembrane segment at 279 to 299 (FLFAVLAEELGLLGVVVVVAL) threads the bilayer. Residues 300–322 (FTYLAWRGMQIGLASLRADRPFG) are Cytoplasmic-facing. Residues 323-343 (AYLAWGLTISIGLQAFINMAV) traverse the membrane as a helical segment. The Periplasmic portion of the chain corresponds to 344–354 (TMGLLPTKGLT). The chain crosses the membrane as a helical span at residues 355–375 (LPLMSYGGSSLIMTGIALALL). The Cytoplasmic segment spans residues 376–401 (LRVDYEARLAAQQPRPRKRPSGRVRP).

Belongs to the SEDS family. FtsW subfamily.

It is found in the cell inner membrane. It catalyses the reaction [GlcNAc-(1-&gt;4)-Mur2Ac(oyl-L-Ala-gamma-D-Glu-L-Lys-D-Ala-D-Ala)](n)-di-trans,octa-cis-undecaprenyl diphosphate + beta-D-GlcNAc-(1-&gt;4)-Mur2Ac(oyl-L-Ala-gamma-D-Glu-L-Lys-D-Ala-D-Ala)-di-trans,octa-cis-undecaprenyl diphosphate = [GlcNAc-(1-&gt;4)-Mur2Ac(oyl-L-Ala-gamma-D-Glu-L-Lys-D-Ala-D-Ala)](n+1)-di-trans,octa-cis-undecaprenyl diphosphate + di-trans,octa-cis-undecaprenyl diphosphate + H(+). The protein operates within cell wall biogenesis; peptidoglycan biosynthesis. Its function is as follows. Peptidoglycan polymerase that is essential for cell division. In Alkalilimnicola ehrlichii (strain ATCC BAA-1101 / DSM 17681 / MLHE-1), this protein is Probable peptidoglycan glycosyltransferase FtsW.